We begin with the raw amino-acid sequence, 571 residues long: Proline--tRNA ligase (571 aa).

Belongs to the class-II aminoacyl-tRNA synthetase family. ProS type 1 subfamily. Homodimer.

The protein localises to the cytoplasm. The catalysed reaction is tRNA(Pro) + L-proline + ATP = L-prolyl-tRNA(Pro) + AMP + diphosphate. Its function is as follows. Catalyzes the attachment of proline to tRNA(Pro) in a two-step reaction: proline is first activated by ATP to form Pro-AMP and then transferred to the acceptor end of tRNA(Pro). As ProRS can inadvertently accommodate and process non-cognate amino acids such as alanine and cysteine, to avoid such errors it has two additional distinct editing activities against alanine. One activity is designated as 'pretransfer' editing and involves the tRNA(Pro)-independent hydrolysis of activated Ala-AMP. The other activity is designated 'posttransfer' editing and involves deacylation of mischarged Ala-tRNA(Pro). The misacylated Cys-tRNA(Pro) is not edited by ProRS. In Shewanella baltica (strain OS185), this protein is Proline--tRNA ligase.